Here is a 497-residue protein sequence, read N- to C-terminus: 4,4'-diaponeurosporene oxygenase (497 aa).

7-19 is an FAD binding site; that stretch reads VIGGGLGGISAAI.

It belongs to the carotenoid/retinoid oxidoreductase family. CrtP subfamily. The cofactor is FAD.

It carries out the reaction all-trans-4,4'-diaponeurosporene + 2 AH2 + 2 O2 = 4,4'-diaponeurosporenal + 2 A + 3 H2O. It functions in the pathway carotenoid biosynthesis; staphyloxanthin biosynthesis; staphyloxanthin from farnesyl diphosphate: step 3/5. Its function is as follows. Involved in the biosynthesis of the yellow-orange carotenoid staphyloxanthin, which plays a role in the virulence via its protective function against oxidative stress. Catalyzes the oxidation of the terminal methyl side group of 4,4'-diaponeurosporene to form 4,4'-diaponeurosporen-4-al. This Staphylococcus aureus (strain MSSA476) protein is 4,4'-diaponeurosporene oxygenase.